A 386-amino-acid polypeptide reads, in one-letter code: Zinc finger protein 385A (386 aa).

The Matrin-type 1 zinc finger occupies 74 to 98; the sequence is ISCNICQIRFNSQSQAEAHYKGNRH. The disordered stretch occupies residues 90–193; that stretch reads EAHYKGNRHA…ASLPGGSKEE (104 aa). Basic and acidic residues predominate over residues 103–121; that stretch reads KGIEAAKTRGREPGVREPG. Residues 145 to 351 are necessary for binding to ITPR1, CEBPA and p53/TP53 mRNAs; that stretch reads NGLGPAPGSP…AGSPLSLRPA (207 aa). S185 carries the post-translational modification Phosphoserine. The Matrin-type 2 zinc-finger motif lies at 201 to 225; sequence LYCALCKVAVNSLSQLEAHNKGTKH. T248 is modified (phosphothreonine). Residues 261 to 285 form a Matrin-type 3 zinc finger; the sequence is FHCEICNVKVNSEVQLKQHISSRRH. A disordered region spans residues 279 to 309; sequence HISSRRHRDGVAGKPNPLLSRHKKSRGAGEL.

Interacts with ELAVL1; the interaction is indirect, mRNA-dependent and may regulate p53/TP53 expression. Interacts with p53/TP53; the interaction is direct and enhances p53/TP53 transactivation functions on cell-cycle arrest target genes, resulting in growth arrest. Ubiquitinated upon prolonged exposure to genotoxic stress, which leads to proteasomal degradation of ZNF385A and releases p53/TP53 from cell-cycle arrest target gene promoters. Expressed predominantly in the retina.

The protein localises to the cytoplasm. It is found in the nucleus. It localises to the nucleolus. The protein resides in the cell projection. Its subcellular location is the dendrite. Functionally, RNA-binding protein that affects the localization and the translation of a subset of mRNA. May play a role in adipogenesis through binding to the 3'-UTR of CEBPA mRNA and regulation of its translation. Targets ITPR1 mRNA to dendrites in Purkinje cells, and may regulate its activity-dependent translation. With ELAVL1, binds the 3'-UTR of p53/TP53 mRNAs to control their nuclear export induced by CDKN2A. Hence, may regulate p53/TP53 expression and mediate in part the CDKN2A anti-proliferative activity. May also bind CCNB1 mRNA. Alternatively, may also regulate p53/TP53 activity through direct protein-protein interaction. Interacts with p53/TP53 and promotes cell-cycle arrest over apoptosis enhancing preferentially the DNA binding and transactivation of p53/TP53 on cell-cycle arrest target genes over proapoptotic target genes. May also regulate the ubiquitination and stability of CDKN1A promoting DNA damage-induced cell cycle arrest. Also plays a role in megakaryocytes differentiation. The polypeptide is Zinc finger protein 385A (ZNF385A) (Homo sapiens (Human)).